A 497-amino-acid chain; its full sequence is Phenylalanine--tRNA ligase alpha subunit (497 aa).

Residues Thr-329, 372–374 (QIE), and Tyr-412 contribute to the L-phenylalanine site. Residue Glu-414 participates in Mg(2+) binding. L-phenylalanine is bound at residue Phe-438.

It belongs to the class-II aminoacyl-tRNA synthetase family. Phe-tRNA synthetase alpha subunit type 2 subfamily. In terms of assembly, heterotetramer; dimer of two heterodimers formed by alpha and beta subunits. It depends on Mg(2+) as a cofactor.

The protein localises to the cytoplasm. It carries out the reaction tRNA(Phe) + L-phenylalanine + ATP = L-phenylalanyl-tRNA(Phe) + AMP + diphosphate + H(+). This is Phenylalanine--tRNA ligase alpha subunit (farsa) from Danio rerio (Zebrafish).